A 110-amino-acid polypeptide reads, in one-letter code: UPF0060 membrane protein Ping_0587 (110 aa).

Helical transmembrane passes span Ile6 to Leu26, Ser33 to Leu53, Thr61 to Glu81, and Met87 to Pro107.

Belongs to the UPF0060 family.

Its subcellular location is the cell inner membrane. The chain is UPF0060 membrane protein Ping_0587 from Psychromonas ingrahamii (strain DSM 17664 / CCUG 51855 / 37).